We begin with the raw amino-acid sequence, 1024 residues long: Beta-galactosidase (1024 aa).

Substrate contacts are provided by N103 and D202. D202 provides a ligand contact to Na(+). The Mg(2+) site is built by E417, H419, and E462. Residues E462 and 538–541 (EYAH) each bind substrate. E462 functions as the Proton donor in the catalytic mechanism. Catalysis depends on E538, which acts as the Nucleophile. Position 598 (N598) interacts with Mg(2+). F602 and N605 together coordinate Na(+). 2 residues coordinate substrate: N605 and W1000.

This sequence belongs to the glycosyl hydrolase 2 family. Homotetramer. It depends on Mg(2+) as a cofactor. Na(+) serves as cofactor.

The enzyme catalyses Hydrolysis of terminal non-reducing beta-D-galactose residues in beta-D-galactosides.. The chain is Beta-galactosidase from Escherichia coli O139:H28 (strain E24377A / ETEC).